The primary structure comprises 413 residues: Gamma-lactamase FDB1 (413 aa).

Zn(2+) contacts are provided by His126, His128, Asp130, His131, His211, Asp235, and His323.

This sequence belongs to the metallo-beta-lactamase superfamily.

The protein operates within xenobiotic degradation. Functionally, gamma-lactamase; part of the Fusarium detoxification of benzoxazolinone cluster involved in the degradation of benzoxazolinones produced by the host plant. Maize, wheat, and rye produce the 2 benzoxazinone phytoanticipins 2,4-dihy-droxy-7-methoxy-1,4-benzoxazin-3-one (DIMBOA) and 2,4-dihydroxy-1,4-benzoxazin-3-one (DIBOA) that, due to their inherent instability once released, spontaneously degrade to the more stable corresponding benzoxazolinones, 6-methoxy-2-benzoxazolinone (MBOA) and 2-benzoxazolinone (BOA), respectively. The first step in the detoxification of benzoxazolinones involves the hydrolysis of the cyclic ester bond of benzoxazolinones by the gamma-lactamase FDB1 to aminophenols. FDB1 is able to convert BOA into 2-aminophenol (2-AP), as well as MBOA into 5-methoxy-2-aminophenol (2-AMP). The N-malonyltransferase FDB2 then metabolizes aminophenols via N-malonylation to non-toxic malonamic acids. FDB2 converts 2-AP into N-(2-hydroxyphenyl) malonamic acid (HPMA) and 2-AMP into N-(2-hydroxy-4-methoxyphenyl) malonamic acid (HMPMA). The cluster also contains 2 transcription factors (FDB3 and FPSE_08121), an aldo-keto reductase (FPSE_08125) that possibly associates with a ketone component of BOA and MBOA degradation, an esterase (FPSE_08126), an acyl-CoA transferase (FPSE_08120), a solute carrier protein (FPSE_08119) and a transmembrane transporter (FPSE_08127) proposed to shuttle metabolites of benzoxazolinone degradation. This Fusarium pseudograminearum (strain CS3096) (Wheat and barley crown-rot fungus) protein is Gamma-lactamase FDB1.